The chain runs to 652 residues: Acetyl-coenzyme A synthetase (652 aa).

Residues 191–194 (RAGR), Thr311, and Asn335 contribute to the CoA site. ATP contacts are provided by residues 387–389 (GEP), 411–416 (DTWWQT), Asp500, and Arg515. Ser523 contacts CoA. ATP is bound at residue Arg526. Residues Val537, His539, and Ile542 each coordinate Mg(2+). CoA is bound at residue Arg584. Position 609 is an N6-acetyllysine (Lys609).

Belongs to the ATP-dependent AMP-binding enzyme family. Requires Mg(2+) as cofactor. Post-translationally, acetylated. Deacetylation by the SIR2-homolog deacetylase activates the enzyme.

It carries out the reaction acetate + ATP + CoA = acetyl-CoA + AMP + diphosphate. Functionally, catalyzes the conversion of acetate into acetyl-CoA (AcCoA), an essential intermediate at the junction of anabolic and catabolic pathways. Acs undergoes a two-step reaction. In the first half reaction, Acs combines acetate with ATP to form acetyl-adenylate (AcAMP) intermediate. In the second half reaction, it can then transfer the acetyl group from AcAMP to the sulfhydryl group of CoA, forming the product AcCoA. In terms of biological role, enables the cell to use acetate during aerobic growth to generate energy via the TCA cycle, and biosynthetic compounds via the glyoxylate shunt. Acetylates CheY, the response regulator involved in flagellar movement and chemotaxis. The sequence is that of Acetyl-coenzyme A synthetase from Yersinia pseudotuberculosis serotype I (strain IP32953).